The sequence spans 579 residues: UvrABC system protein C (579 aa).

The GIY-YIG domain maps to 12–89 (DATGVYIFRD…IKRYRPPYNV (78 aa)). The region spanning 193 to 228 (QEVIEVLEEEMKEASERLEFERAARIRDQIESIREV) is the UVR domain.

This sequence belongs to the UvrC family. In terms of assembly, interacts with UvrB in an incision complex.

The protein resides in the cytoplasm. In terms of biological role, the UvrABC repair system catalyzes the recognition and processing of DNA lesions. UvrC both incises the 5' and 3' sides of the lesion. The N-terminal half is responsible for the 3' incision and the C-terminal half is responsible for the 5' incision. In Methanothermobacter thermautotrophicus (strain ATCC 29096 / DSM 1053 / JCM 10044 / NBRC 100330 / Delta H) (Methanobacterium thermoautotrophicum), this protein is UvrABC system protein C.